The following is a 658-amino-acid chain: Translation factor GUF1, mitochondrial (658 aa).

The transit peptide at 1 to 40 (MRGCLQTVRWLTSAWQRPRSYSPLSRAAPCRFFNVSIPRN) directs the protein to the mitochondrion. Residues 60–240 (DRFRNFCIVA…TVVEQIPAPV (181 aa)) form the tr-type G domain. Residues 69-76 (AHVDHGKS), 133-137 (DTPGH), and 187-190 (NKVD) contribute to the GTP site.

It belongs to the TRAFAC class translation factor GTPase superfamily. Classic translation factor GTPase family. LepA subfamily.

The protein resides in the mitochondrion inner membrane. It carries out the reaction GTP + H2O = GDP + phosphate + H(+). Its function is as follows. Promotes mitochondrial protein synthesis. May act as a fidelity factor of the translation reaction, by catalyzing a one-codon backward translocation of tRNAs on improperly translocated ribosomes. Binds to mitochondrial ribosomes in a GTP-dependent manner. The polypeptide is Translation factor GUF1, mitochondrial (Paracoccidioides lutzii (strain ATCC MYA-826 / Pb01) (Paracoccidioides brasiliensis)).